Here is a 486-residue protein sequence, read N- to C-terminus: Elastin-binding protein EbpS (486 aa).

The span at 1–40 (MSNNFKDDFEKNRQSIDTNSHQDHTEDVEKDQSELEHQDT) shows a compositional bias: basic and acidic residues. Residues 1–314 (MSNNFKDDFE…NHDRDKERKK (314 aa)) are disordered. Residues 2-204 (SNNFKDDFEK…ESKDHHSGKK (203 aa)) are Extracellular-facing. The tract at residues 14–34 (QSIDTNSHQDHTEDVEKDQSE) is elastin-binding. A compositionally biased stretch (polar residues) spans 64–85 (TNHNKQVHNESQTSEDNVQNEA). 3 stretches are compositionally biased toward basic and acidic residues: residues 103 to 118 (EPSHQDSTPQHEEEYY), 126 to 160 (DKSHPEPIEDNDKHETIKEAENNTEHSTVSDKSEA), and 180 to 199 (SKDKHDDVTVKQDKDESKDH). Low complexity-rich tracts occupy residues 204–225 (KGAAIGAGTAGVAGAAGAMGVS) and 233–246 (DAQNKSNSDKSNNS). The chain crosses the membrane as a helical span at residues 205 to 225 (GAAIGAGTAGVAGAAGAMGVS). Residues 226–319 (KAKKHSNDAQ…KERKKGGMAK (94 aa)) are Cytoplasmic-facing. The segment covering 247–259 (TEDKVSQDKSKDH) has biased composition (basic and acidic residues). A compositionally biased stretch (low complexity) spans 278 to 297 (GAASKSASAASKPHASNNAS). Residues 299 to 314 (NHDEHDNHDRDKERKK) show a composition bias toward basic and acidic residues. Residues 320 to 340 (VLLPLIAAVLIIGALAIFGGM) traverse the membrane as a helical segment. Over 341–486 (ALNNHNNGTK…IRNGQQIVIP (146 aa)) the chain is Extracellular. The tract at residues 351–440 (ENKIANTNKN…QRQGGGQRHT (90 aa)) is disordered. A compositionally biased stretch (basic and acidic residues) spans 361–398 (NADESKDKDTSKDASKDKSKSTDSDKSKEDQDKATKDE). Over residues 403–431 (QNNANQANNQAQNNQNQQQANQNQQQQQQ) the composition is skewed to low complexity. In terms of domain architecture, LysM spans 437–485 (QRHTVNGQENLYRIAIQYYGSGSPENVEKIRRANGLSGNNIRNGQQIVI).

The protein resides in the cell membrane. In terms of biological role, promotes binding of soluble elastin peptides and tropoelastin to S.aureus cells although it is not able to promote bacterial adherence to immobilized elastin and, therefore, is not a microbial surface component recognizing adhesive matrix molecule (MSCRAMM). This chain is Elastin-binding protein EbpS (ebpS), found in Staphylococcus aureus (strain MSSA476).